The chain runs to 176 residues: Small ribosomal subunit protein bS6 (176 aa).

The disordered stretch occupies residues 97–176; the sequence is DQYTPNDSPP…VEPVDTTSEE (80 aa). Positions 140 to 160 are enriched in low complexity; that stretch reads AVETVEPPAEPAEPVEAVETV. Positions 161-176 are enriched in acidic residues; it reads DTTEETVEPVDTTSEE.

Belongs to the bacterial ribosomal protein bS6 family.

Binds together with bS18 to 16S ribosomal RNA. The polypeptide is Small ribosomal subunit protein bS6 (Gloeothece citriformis (strain PCC 7424) (Cyanothece sp. (strain PCC 7424))).